The sequence spans 162 residues: Phycoerythrocyanin alpha chain (162 aa).

C84 contributes to the (15Z)-phycoviolobilin binding site.

The protein belongs to the phycobiliprotein family. As to quaternary structure, heterodimer of an alpha and a beta chain. Post-translationally, contains one covalently linked bilin chromophore.

It is found in the cellular thylakoid membrane. Light-harvesting photosynthetic bile pigment-protein from the phycobiliprotein complex. The chain is Phycoerythrocyanin alpha chain (pecA) from Nostoc sp. (strain PCC 7120 / SAG 25.82 / UTEX 2576).